Here is a 152-residue protein sequence, read N- to C-terminus: Eukaryotic translation initiation factor 2 subunit 3 (152 aa).

Ala1 bears the N-acetylalanine mark. 51–54 (NKID) serves as a coordination point for GTP.

This sequence belongs to the TRAFAC class translation factor GTPase superfamily. Classic translation factor GTPase family. EIF2G subfamily. Eukaryotic translation initiation factor 2 eIF2 is a heterotrimeric complex composed of an alpha (EIF2S1), a beta (EIF2S2) and a gamma (EIF2S3) chain. eIF2 is member of the 43S pre-initiation complex (43S PIC). Interacts (via C-terminus) with CDC123; the interaction is direct.

Its subcellular location is the cytoplasm. The protein resides in the cytosol. Member of the eIF2 complex that functions in the early steps of protein synthesis by forming a ternary complex with GTP and initiator tRNA. This complex binds to a 40S ribosomal subunit, followed by mRNA binding to form the 43S pre-initiation complex (43S PIC). Junction of the 60S ribosomal subunit to form the 80S initiation complex is preceded by hydrolysis of the GTP bound to eIF2 and release of an eIF2-GDP binary complex. In order for eIF2 to recycle and catalyze another round of initiation, the GDP bound to eIF2 must exchange with GTP by way of a reaction catalyzed by eIF-2B. The sequence is that of Eukaryotic translation initiation factor 2 subunit 3 (EIF2S3) from Oryctolagus cuniculus (Rabbit).